Here is a 304-residue protein sequence, read N- to C-terminus: Phosphatidylserine decarboxylase proenzyme (304 aa).

Active-site charge relay system; for autoendoproteolytic cleavage activity residues include Asp-90, His-147, and Ser-253. Ser-253 functions as the Schiff-base intermediate with substrate; via pyruvic acid; for decarboxylase activity in the catalytic mechanism. Residue Ser-253 is modified to Pyruvic acid (Ser); by autocatalysis.

Belongs to the phosphatidylserine decarboxylase family. PSD-B subfamily. Prokaryotic type I sub-subfamily. In terms of assembly, heterodimer of a large membrane-associated beta subunit and a small pyruvoyl-containing alpha subunit. It depends on pyruvate as a cofactor. Post-translationally, is synthesized initially as an inactive proenzyme. Formation of the active enzyme involves a self-maturation process in which the active site pyruvoyl group is generated from an internal serine residue via an autocatalytic post-translational modification. Two non-identical subunits are generated from the proenzyme in this reaction, and the pyruvate is formed at the N-terminus of the alpha chain, which is derived from the carboxyl end of the proenzyme. The autoendoproteolytic cleavage occurs by a canonical serine protease mechanism, in which the side chain hydroxyl group of the serine supplies its oxygen atom to form the C-terminus of the beta chain, while the remainder of the serine residue undergoes an oxidative deamination to produce ammonia and the pyruvoyl prosthetic group on the alpha chain. During this reaction, the Ser that is part of the protease active site of the proenzyme becomes the pyruvoyl prosthetic group, which constitutes an essential element of the active site of the mature decarboxylase.

It localises to the cell membrane. The enzyme catalyses a 1,2-diacyl-sn-glycero-3-phospho-L-serine + H(+) = a 1,2-diacyl-sn-glycero-3-phosphoethanolamine + CO2. It participates in phospholipid metabolism; phosphatidylethanolamine biosynthesis; phosphatidylethanolamine from CDP-diacylglycerol: step 2/2. Catalyzes the formation of phosphatidylethanolamine (PtdEtn) from phosphatidylserine (PtdSer). The protein is Phosphatidylserine decarboxylase proenzyme of Dickeya dadantii (strain 3937) (Erwinia chrysanthemi (strain 3937)).